A 393-amino-acid polypeptide reads, in one-letter code: Probable acetyl-CoA acyltransferase (393 aa).

The active-site Acyl-thioester intermediate is C88. Catalysis depends on proton acceptor residues H349 and C378.

This sequence belongs to the thiolase-like superfamily. Thiolase family.

It is found in the cytoplasm. The enzyme catalyses 2 acetyl-CoA = acetoacetyl-CoA + CoA. The polypeptide is Probable acetyl-CoA acyltransferase (Staphylococcus aureus (strain COL)).